A 169-amino-acid chain; its full sequence is Group 2 truncated hemoglobin 3-2 (169 aa).

His99 serves as a coordination point for heme b.

The protein belongs to the truncated hemoglobin family. Group II subfamily. In terms of assembly, homodimer when ferric.

Functionally, hemoglobin-like protein that exhibits an unusual concentration-independent binding of O(2) and CO. Required for general plant development and during nodulation. May promote shoot organogenesis from root explants. This chain is Group 2 truncated hemoglobin 3-2, found in Medicago truncatula (Barrel medic).